The chain runs to 232 residues: Sugar fermentation stimulation protein homolog (232 aa).

This sequence belongs to the SfsA family.

In Magnetococcus marinus (strain ATCC BAA-1437 / JCM 17883 / MC-1), this protein is Sugar fermentation stimulation protein homolog.